We begin with the raw amino-acid sequence, 2234 residues long: RNA-directed RNA polymerase L (2234 aa).

The endonuclease stretch occupies residues 26 to 283 (ITVVTSQTEM…INLSDEKLSC (258 aa)). Mn(2+) is bound by residues Glu-51, Asp-89, and Glu-102. Lys-115 is an active-site residue. Residues 879 to 891 (KRDDHMKDSEDSK) are compositionally biased toward basic and acidic residues. Disordered stretches follow at residues 879-898 (KRDDHMKDSEDSKQNLSSDL) and 927-949 (KLKEKTEARQSSSGSSLKNQQKR). The segment covering 935–945 (RQSSSGSSLKN) has biased composition (polar residues). In terms of domain architecture, RdRp catalytic spans 1184 to 1383 (MEMKMSVNLG…FISSKFNKFV (200 aa)). Asp-1342 serves as a coordination point for Mg(2+).

It belongs to the Bunyavirales RNA polymerase family. In terms of assembly, homomultimer; the oligomeric structure is essential for the polymerase activity. Interacts with nucleoprotein N. Interacts with protein Z; this interaction inhibits viral transcription and replication, Z partially blocks the product exit tunnel for the releasing nascent RNA product. Mn(2+) serves as cofactor. It depends on Mg(2+) as a cofactor.

It localises to the virion. It is found in the host cytoplasm. The catalysed reaction is RNA(n) + a ribonucleoside 5'-triphosphate = RNA(n+1) + diphosphate. Functionally, RNA-dependent RNA polymerase, which is responsible for the replication and transcription of the viral RNA genome using antigenomic RNA as an intermediate. During transcription, synthesizes subgenomic RNAs and assures their capping by a cap-snatching mechanism, which involves the endonuclease activity cleaving the host capped pre-mRNAs. These short capped RNAs are then used as primers for viral transcription. The 3'-end of subgenomic mRNAs molecules are heterogeneous and not polyadenylated. The replicase function is to direct synthesis of antigenomic and genomic RNA which are encapsidated and non capped. As a consequence of the use of the same enzyme for both transcription and replication, these mechanisms need to be well coordinated. These processes may be regulated by proteins N and Z in a dose-dependent manner. Z protein inhibits the viral polymerase L und thus the viral transcription and RNA synthesis. This is RNA-directed RNA polymerase L from Bolomys (OLVV).